The sequence spans 189 residues: Chitin synthase 1 (189 aa).

The protein belongs to the chitin synthase family. Class I subfamily.

It localises to the cell membrane. The enzyme catalyses [(1-&gt;4)-N-acetyl-beta-D-glucosaminyl](n) + UDP-N-acetyl-alpha-D-glucosamine = [(1-&gt;4)-N-acetyl-beta-D-glucosaminyl](n+1) + UDP + H(+). Functionally, polymerizes chitin, a structural polymer of the cell wall and septum, by transferring the sugar moiety of UDP-GlcNAc to the non-reducing end of the growing chitin polymer. This is Chitin synthase 1 (chs1) from Botryotinia fuckeliana (Noble rot fungus).